The following is a 215-amino-acid chain: MGRVYDWFEERLEIQAIADDITSKYVPPHVNIFYCLGGITLTCFLVQVATGFAMTFYYRPTVTEAFASVQYIMTEVNFGWLIRSVHRWSASMMVLMMILHIFRVYLTGGFKKPRELTWVTGVILAVLTVSFGVTGYSLPWDQIGYWAVKIVTGVPEAIPVIGSPLVEILRGSVSVGQSTLTRFYSLHTFVLPLLTAVFMLMHFLMIRKQGISGPL.

The helical transmembrane segment at 32 to 52 threads the bilayer; sequence IFYCLGGITLTCFLVQVATGF. Cys35 serves as a coordination point for heme c. Residues His86 and His100 each coordinate heme b. The next 3 helical transmembrane spans lie at 90-110, 116-136, and 186-206; these read ASMM…TGGF, LTWV…VTGY, and LHTF…FLMI. Heme b is bound by residues His187 and His202.

The protein belongs to the cytochrome b family. PetB subfamily. As to quaternary structure, the 4 large subunits of the cytochrome b6-f complex are cytochrome b6, subunit IV (17 kDa polypeptide, PetD), cytochrome f and the Rieske protein, while the 4 small subunits are PetG, PetL, PetM and PetN. The complex functions as a dimer. Requires heme b as cofactor. Heme c serves as cofactor.

The protein resides in the plastid. It is found in the chloroplast thylakoid membrane. In terms of biological role, component of the cytochrome b6-f complex, which mediates electron transfer between photosystem II (PSII) and photosystem I (PSI), cyclic electron flow around PSI, and state transitions. This chain is Cytochrome b6, found in Physcomitrium patens (Spreading-leaved earth moss).